A 145-amino-acid chain; its full sequence is Superoxide dismutase [Mn/Fe] (145 aa).

2 residues coordinate Fe(3+): H10 and H64. H10 and H64 together coordinate Mn(2+). The interval T126–L145 is disordered.

It belongs to the iron/manganese superoxide dismutase family. The cofactor is Mn(2+). Requires Fe(3+) as cofactor.

It catalyses the reaction 2 superoxide + 2 H(+) = H2O2 + O2. Destroys superoxide anion radicals which are normally produced within the cells and which are toxic to biological systems. Catalyzes the dismutation of superoxide anion radicals into O2 and H2O2 by successive reduction and oxidation of the transition metal ion at the active site. The chain is Superoxide dismutase [Mn/Fe] (sodA) from Streptococcus mitis.